Reading from the N-terminus, the 114-residue chain is Superoxide dismutase [Cu-Zn] (114 aa).

Residues histidine 37, histidine 39, and histidine 54 each coordinate Cu cation. The interval 49-73 is disordered; that stretch reads MSSGPHYNPRNKEHGAPTDENRHLG. The Zn(2+) site is built by histidine 54, histidine 62, histidine 71, and aspartate 74. Basic and acidic residues predominate over residues 58-73; the sequence is RNKEHGAPTDENRHLG. Histidine 111 contributes to the Cu cation binding site.

The protein belongs to the Cu-Zn superoxide dismutase family. As to quaternary structure, homodimer. Requires Cu cation as cofactor. The cofactor is Zn(2+).

The protein localises to the cytoplasm. The enzyme catalyses 2 superoxide + 2 H(+) = H2O2 + O2. Its function is as follows. Destroys radicals which are normally produced within the cells and which are toxic to biological systems. The sequence is that of Superoxide dismutase [Cu-Zn] from Drosophila madeirensis (Fruit fly).